Here is a 405-residue protein sequence, read N- to C-terminus: MSEIQLNTIEEAIEDFREGKFLIVVDDEDRENEGDFIIAAEKVTPEKINFMLKNGRGVLCAPITEERCQELELDMQVANNTSLLGTPFTITVDKLGGKCTTGVSMYDRAETILALADPKTKPSDLGRPGHINPLRARSRGVLRRAGHTEAAVDLARLAGLYPAGALIEIINEDGTMARLPQLIEVAKKFDIKIICIKDLIAYRLRTESIVENGVEVDLPTEYGHFRLIPFRQKSNGLEHIALIKGKFEKDEPILVRVHSSCATGDIFGSMRCECGEQLHEAMRRIDQEGKGVIVYLNQEGRGIGLMEKMKAYKLQEDGLDTVDANLHLGHQADERDYGVGAQILRHIGVTKMRLMSNNPVKRVGLEAYGLEVVENVPIEVKPNPYNEFYMKTKKERMGHVLHNIK.

Residues 1 to 205 (MSEIQLNTIE…IKDLIAYRLR (205 aa)) are DHBP synthase. D-ribulose 5-phosphate-binding positions include 30-31 (RE), Asp-35, 144-148 (RAGHT), and Glu-168. Mg(2+) is bound at residue Glu-31. His-147 contributes to the Mg(2+) binding site. Residues 206 to 405 (TESIVENGVE…RMGHVLHNIK (200 aa)) are GTP cyclohydrolase II. A GTP-binding site is contributed by 256–260 (RVHSS). Cys-261, Cys-272, and Cys-274 together coordinate Zn(2+). GTP is bound by residues Gln-277, 299–301 (EGR), and Thr-321. Asp-333 functions as the Proton acceptor; for GTP cyclohydrolase activity in the catalytic mechanism. Arg-335 functions as the Nucleophile; for GTP cyclohydrolase activity in the catalytic mechanism. Residues Ser-356 and Lys-361 each coordinate GTP.

In the N-terminal section; belongs to the DHBP synthase family. The protein in the C-terminal section; belongs to the GTP cyclohydrolase II family. Requires Mg(2+) as cofactor. The cofactor is Mn(2+). It depends on Zn(2+) as a cofactor.

The enzyme catalyses D-ribulose 5-phosphate = (2S)-2-hydroxy-3-oxobutyl phosphate + formate + H(+). The catalysed reaction is GTP + 4 H2O = 2,5-diamino-6-hydroxy-4-(5-phosphoribosylamino)-pyrimidine + formate + 2 phosphate + 3 H(+). It participates in cofactor biosynthesis; riboflavin biosynthesis; 2-hydroxy-3-oxobutyl phosphate from D-ribulose 5-phosphate: step 1/1. The protein operates within cofactor biosynthesis; riboflavin biosynthesis; 5-amino-6-(D-ribitylamino)uracil from GTP: step 1/4. Functionally, catalyzes the conversion of D-ribulose 5-phosphate to formate and 3,4-dihydroxy-2-butanone 4-phosphate. Its function is as follows. Catalyzes the conversion of GTP to 2,5-diamino-6-ribosylamino-4(3H)-pyrimidinone 5'-phosphate (DARP), formate and pyrophosphate. The protein is Riboflavin biosynthesis protein RibBA of Parabacteroides distasonis (strain ATCC 8503 / DSM 20701 / CIP 104284 / JCM 5825 / NCTC 11152).